Here is a 174-residue protein sequence, read N- to C-terminus: Sarcoplasmic calcium-binding protein (174 aa).

Position 1 is an N-acetylserine (serine 1). EF-hand domains follow at residues 3 to 38 (LWVQ…FAKE), 55 to 90 (GVWD…EAKS), 91 to 126 (VVEG…LGLD), and 127 to 160 (KTMA…FFMN). Residues aspartate 16, aspartate 18, aspartate 20, and aspartate 27 each contribute to the Ca(2+) site. 9 residues coordinate Ca(2+): aspartate 104, asparagine 106, aspartate 108, asparagine 110, glutamate 115, aspartate 138, asparagine 140, aspartate 142, and glutamate 149.

Like parvalbumins, SCPs seem to be more abundant in fast contracting muscles, but no functional relationship can be established from this distribution. The protein is Sarcoplasmic calcium-binding protein of Hediste diversicolor (Sandworm).